Here is a 437-residue protein sequence, read N- to C-terminus: Trigger factor (437 aa).

A PPIase FKBP-type domain is found at 163–248 (DDRVTVDFEG…VKKIEASHLP (86 aa)).

Belongs to the FKBP-type PPIase family. Tig subfamily.

The protein localises to the cytoplasm. It catalyses the reaction [protein]-peptidylproline (omega=180) = [protein]-peptidylproline (omega=0). Its function is as follows. Involved in protein export. Acts as a chaperone by maintaining the newly synthesized protein in an open conformation. Functions as a peptidyl-prolyl cis-trans isomerase. The protein is Trigger factor of Variovorax paradoxus (strain S110).